Here is a 274-residue protein sequence, read N- to C-terminus: NAD kinase (274 aa).

The active-site Proton acceptor is Asp-61. NAD(+) contacts are provided by residues 61-62 (DG), Lys-66, 134-135 (ND), Lys-145, Asp-164, and 175-180 (TAYSLS).

This sequence belongs to the NAD kinase family. The cofactor is a divalent metal cation.

Its subcellular location is the cytoplasm. It catalyses the reaction NAD(+) + ATP = ADP + NADP(+) + H(+). Its function is as follows. Involved in the regulation of the intracellular balance of NAD and NADP, and is a key enzyme in the biosynthesis of NADP. Catalyzes specifically the phosphorylation on 2'-hydroxyl of the adenosine moiety of NAD to yield NADP. The chain is NAD kinase from Clostridium tetani (strain Massachusetts / E88).